The primary structure comprises 244 residues: UDP-2,3-diacylglucosamine hydrolase (244 aa).

D8, H10, D41, N79, and H114 together coordinate Mn(2+). Substrate is bound at residue N79–R80. D122, S160, N164, K167, and H195 together coordinate substrate. Residues H195 and H197 each coordinate Mn(2+).

It belongs to the LpxH family. It depends on Mn(2+) as a cofactor.

The protein resides in the cell inner membrane. It carries out the reaction UDP-2-N,3-O-bis[(3R)-3-hydroxytetradecanoyl]-alpha-D-glucosamine + H2O = 2-N,3-O-bis[(3R)-3-hydroxytetradecanoyl]-alpha-D-glucosaminyl 1-phosphate + UMP + 2 H(+). The protein operates within glycolipid biosynthesis; lipid IV(A) biosynthesis; lipid IV(A) from (3R)-3-hydroxytetradecanoyl-[acyl-carrier-protein] and UDP-N-acetyl-alpha-D-glucosamine: step 4/6. In terms of biological role, hydrolyzes the pyrophosphate bond of UDP-2,3-diacylglucosamine to yield 2,3-diacylglucosamine 1-phosphate (lipid X) and UMP by catalyzing the attack of water at the alpha-P atom. Involved in the biosynthesis of lipid A, a phosphorylated glycolipid that anchors the lipopolysaccharide to the outer membrane of the cell. The chain is UDP-2,3-diacylglucosamine hydrolase from Hahella chejuensis (strain KCTC 2396).